We begin with the raw amino-acid sequence, 308 residues long: Probable manganese-dependent inorganic pyrophosphatase (308 aa).

His-9, Asp-13, Asp-15, Asp-75, His-97, and Asp-149 together coordinate Mn(2+).

Belongs to the PPase class C family. Mn(2+) serves as cofactor.

The protein localises to the cytoplasm. The enzyme catalyses diphosphate + H2O = 2 phosphate + H(+). The protein is Probable manganese-dependent inorganic pyrophosphatase of Bacillus pumilus (strain SAFR-032).